We begin with the raw amino-acid sequence, 432 residues long: Adenylosuccinate synthetase (432 aa).

GTP contacts are provided by residues 13–19 (GDEGKGK) and 41–43 (GHT). D14 functions as the Proton acceptor in the catalytic mechanism. Mg(2+)-binding residues include D14 and G41. IMP is bound by residues 14 to 17 (DEGK), 39 to 42 (NAGH), T130, R144, Q225, T240, and R304. H42 serves as the catalytic Proton donor. Residue 300–306 (AVTGRPR) coordinates substrate. GTP contacts are provided by residues R306, 332–334 (KLD), and 415–417 (STG).

This sequence belongs to the adenylosuccinate synthetase family. Homodimer. The cofactor is Mg(2+).

The protein localises to the cytoplasm. It carries out the reaction IMP + L-aspartate + GTP = N(6)-(1,2-dicarboxyethyl)-AMP + GDP + phosphate + 2 H(+). It participates in purine metabolism; AMP biosynthesis via de novo pathway; AMP from IMP: step 1/2. Functionally, plays an important role in the de novo pathway of purine nucleotide biosynthesis. Catalyzes the first committed step in the biosynthesis of AMP from IMP. This is Adenylosuccinate synthetase from Actinobacillus pleuropneumoniae serotype 7 (strain AP76).